We begin with the raw amino-acid sequence, 369 residues long: tRNA-specific 2-thiouridylase MnmA (369 aa).

ATP is bound by residues alanine 16–serine 23 and methionine 42. The Nucleophile role is filled by cysteine 110. Cysteines 110 and 206 form a disulfide. ATP is bound at residue glycine 134. The segment at lysine 156 to glutamine 158 is interaction with tRNA. Cysteine 206 functions as the Cysteine persulfide intermediate in the catalytic mechanism.

It belongs to the MnmA/TRMU family.

It is found in the cytoplasm. It carries out the reaction S-sulfanyl-L-cysteinyl-[protein] + uridine(34) in tRNA + AH2 + ATP = 2-thiouridine(34) in tRNA + L-cysteinyl-[protein] + A + AMP + diphosphate + H(+). Its function is as follows. Catalyzes the 2-thiolation of uridine at the wobble position (U34) of tRNA, leading to the formation of s(2)U34. The chain is tRNA-specific 2-thiouridylase MnmA from Orientia tsutsugamushi (strain Boryong) (Rickettsia tsutsugamushi).